The primary structure comprises 145 residues: Peptide methionine sulfoxide reductase MsrB (145 aa).

One can recognise a MsrB domain in the interval 6-129 (KNERLQQLTD…NSAALRFIPV (124 aa)). Cys-118 functions as the Nucleophile in the catalytic mechanism.

This sequence belongs to the MsrB Met sulfoxide reductase family.

The catalysed reaction is L-methionyl-[protein] + [thioredoxin]-disulfide + H2O = L-methionyl-(R)-S-oxide-[protein] + [thioredoxin]-dithiol. The polypeptide is Peptide methionine sulfoxide reductase MsrB (Listeria monocytogenes serotype 4b (strain CLIP80459)).